The following is a 349-amino-acid chain: Flap endonuclease 1 (349 aa).

The segment at 1–98 (MDLGEIVEDV…EEIERRKRAK (98 aa)) is N-domain. Residues Asp-27, Asp-80, Glu-152, Glu-154, Asp-173, Asp-175, and Asp-236 each contribute to the Mg(2+) site. The interval 116–258 (EIRKYAQAAV…TALRIIKKYN (143 aa)) is I-domain. The tract at residues 341–349 (KQTGLDQWF) is interaction with PCNA.

Belongs to the XPG/RAD2 endonuclease family. FEN1 subfamily. Interacts with PCNA. PCNA stimulates the nuclease activity without altering cleavage specificity. It depends on Mg(2+) as a cofactor.

Structure-specific nuclease with 5'-flap endonuclease and 5'-3' exonuclease activities involved in DNA replication and repair. During DNA replication, cleaves the 5'-overhanging flap structure that is generated by displacement synthesis when DNA polymerase encounters the 5'-end of a downstream Okazaki fragment. Binds the unpaired 3'-DNA end and kinks the DNA to facilitate 5' cleavage specificity. Cleaves one nucleotide into the double-stranded DNA from the junction in flap DNA, leaving a nick for ligation. Also involved in the base excision repair (BER) pathway. Acts as a genome stabilization factor that prevents flaps from equilibrating into structures that lead to duplications and deletions. Also possesses 5'-3' exonuclease activity on nicked or gapped double-stranded DNA. In Sulfolobus acidocaldarius (strain ATCC 33909 / DSM 639 / JCM 8929 / NBRC 15157 / NCIMB 11770), this protein is Flap endonuclease 1.